Consider the following 227-residue polypeptide: 7-cyano-7-deazaguanine synthase (227 aa).

7–17 (LSGGMDSLVTT) contributes to the ATP binding site. Zn(2+) is bound by residues C187, C195, C198, and C201.

This sequence belongs to the QueC family. The cofactor is Zn(2+).

The catalysed reaction is 7-carboxy-7-deazaguanine + NH4(+) + ATP = 7-cyano-7-deazaguanine + ADP + phosphate + H2O + H(+). The protein operates within purine metabolism; 7-cyano-7-deazaguanine biosynthesis. In terms of biological role, catalyzes the ATP-dependent conversion of 7-carboxy-7-deazaguanine (CDG) to 7-cyano-7-deazaguanine (preQ(0)). The chain is 7-cyano-7-deazaguanine synthase from Chlorobium phaeovibrioides (strain DSM 265 / 1930) (Prosthecochloris vibrioformis (strain DSM 265)).